The primary structure comprises 390 residues: Zinc finger protein 121 (390 aa).

Residues 88–110 form a C2H2-type 1; degenerate zinc finger; sequence FEYSDCEEAFVDQSHLQANRITH. Residues 116–138 form a C2H2-type 2; degenerate zinc finger; the sequence is YEQKQCGRAFTYSTSHAVSVKMH. 9 C2H2-type zinc fingers span residues 144-166, 172-194, 200-222, 228-250, 256-278, 284-306, 312-334, 340-362, and 368-390; these read YECK…MRTH, YECK…VRIH, YQCK…VRIH, YECN…FKTH, FECK…FRIH, YKCK…VKIH, YECK…IRTH, YICK…VRIH, and YICN…LKTH.

The protein belongs to the krueppel C2H2-type zinc-finger protein family.

It is found in the nucleus. In terms of biological role, may be involved in transcriptional regulation. This Homo sapiens (Human) protein is Zinc finger protein 121 (ZNF121).